The sequence spans 309 residues: Fructosamine-3-kinase (309 aa).

Residue Met-1 is modified to N-acetylmethionine. Glu-89–Leu-91 is a binding site for ATP. Asp-217 functions as the Proton acceptor in the catalytic mechanism.

The protein belongs to the fructosamine kinase family. As to quaternary structure, monomer. In terms of tissue distribution, expressed in red blood cells, brain, heart, kidney and muscle. Lower expression is observed in liver. Not expressed in lung, spleen, testis and thymus.

It carries out the reaction N(6)-(D-fructosyl)-L-lysyl-[protein] + ATP = N(6)-(3-O-phospho-D-fructosyl)-L-lysyl-[protein] + ADP + H(+). It catalyses the reaction N(6)-D-ribulosyl-L-lysyl-[protein] + ATP = N(6)-(3-O-phospho-D-ribulosyl)-L-lysyl-[protein] + ADP + H(+). The catalysed reaction is N(6)-(D-psicosyl)-L-lysyl-[protein] + ATP = N(6)-(3-O-phospho-D-psicosyl)-L-lysyl-[protein] + ADP + H(+). Its function is as follows. Fructosamine-3-kinase involved in protein deglycation by mediating phosphorylation of fructoselysine residues on glycated proteins, to generate fructoselysine-3 phosphate. Fructoselysine-3 phosphate adducts are unstable and decompose under physiological conditions. Involved in intracellular deglycation in erythrocytes and pancreatic islets. Involved in the response to oxidative stress by mediating deglycation of NFE2L2/NRF2, glycation impairing NFE2L2/NRF2 function. Also able to phosphorylate psicosamines and ribulosamines. In Mus musculus (Mouse), this protein is Fructosamine-3-kinase.